We begin with the raw amino-acid sequence, 95 residues long: Protein GOLVEN 9 (95 aa).

An N-terminal signal peptide occupies residues Met1 to Gly24. The propeptide occupies Pro25–His73. The segment at Glu72–His95 is disordered. A Sulfotyrosine modification is found at Tyr75. The segment covering Lys80–His95 has biased composition (basic residues). Residue Pro86 is modified to Hydroxyproline. The propeptide occupies Gly90 to His95.

Belongs to the RGF family. In terms of assembly, binds to LRR receptor-like serine/threonine-protein kinases to trigger their dimerization with SERK proteins and subsequent signaling. As to expression, expressed in roots.

It is found in the secreted. In terms of biological role, signaling peptide (root growth factor) required during root gravitropism in a PIN2-traffic dependent manner. Regulates the pattern of root growth and lateral root development by modulating the length and the number of cortical cells in the root apical meristem (RAM), and the anticlinal asymmetric cell divisions in lateral root initiation cells. In Arabidopsis thaliana (Mouse-ear cress), this protein is Protein GOLVEN 9.